The chain runs to 142 residues: Holo-[acyl-carrier-protein] synthase (142 aa).

Residues Asp9 and Glu63 each coordinate Mg(2+).

This sequence belongs to the P-Pant transferase superfamily. AcpS family. It depends on Mg(2+) as a cofactor.

The protein resides in the cytoplasm. It carries out the reaction apo-[ACP] + CoA = holo-[ACP] + adenosine 3',5'-bisphosphate + H(+). In terms of biological role, transfers the 4'-phosphopantetheine moiety from coenzyme A to a Ser of acyl-carrier-protein. This Burkholderia lata (strain ATCC 17760 / DSM 23089 / LMG 22485 / NCIMB 9086 / R18194 / 383) protein is Holo-[acyl-carrier-protein] synthase.